The primary structure comprises 348 residues: MDENKQKALAAALGQIEKQFGKGSIMRLGDNRTMDVETISTGSLSLDIALGAGGLPMGRIVEVYGPESSGKTTLTLELIAAAQRVGKTCAFIDAEHALDPIYAKKLGVNIDELLVSQPDTGEQALEICDALARSGAIDVIVIDSVAALTPKAEIEGEMGDSHMGLQARMLSQAMRKLTGNLKQSNCMCIFINQIRMKIGVMFGNPETTTGGNALKFYASVRLDIRRTGSIKEGDEVVGNETRIKVVKNKIAAPFKQADTQILYGQGFNREGELVDLGVKHKLVEKAGAWYSYNGDKIGQGKANACKFLRENPAAAMALDTKLREMLLNPAELIVEEPILSEMPQEEEL.

Residue 65–72 (GPESSGKT) participates in ATP binding.

It belongs to the RecA family.

It localises to the cytoplasm. In terms of biological role, can catalyze the hydrolysis of ATP in the presence of single-stranded DNA, the ATP-dependent uptake of single-stranded DNA by duplex DNA, and the ATP-dependent hybridization of homologous single-stranded DNAs. It interacts with LexA causing its activation and leading to its autocatalytic cleavage. This is Protein RecA from Vibrio anguillarum (strain ATCC 68554 / 775) (Listonella anguillarum).